The chain runs to 207 residues: MKNIEIEDDLYKYILANIEAFGETPSQILRRLLSLPNASPDNATPITSSVTPSAPRQEAVNDESSVFEAVTPKVLDRANISLPEPLAHGVNALFDSEVFKTEAVVTNKFMMLLATMYYENKNAFEDAADKTKGRTRDYLGQNLNALLAADSEEEQNFFKASKPRNIPHTPFWVITNANTGRKRIIITQMMASMGYPHYLIERIKEEI.

Over residues 43–54 (ATPITSSVTPSA) the composition is skewed to polar residues. A disordered region spans residues 43–63 (ATPITSSVTPSAPRQEAVNDE).

The protein belongs to the SeqA family. As to quaternary structure, homodimer. Polymerizes to form helical filaments.

It localises to the cytoplasm. In terms of biological role, negative regulator of replication initiation, which contributes to regulation of DNA replication and ensures that replication initiation occurs exactly once per chromosome per cell cycle. Binds to pairs of hemimethylated GATC sequences in the oriC region, thus preventing assembly of replication proteins and re-initiation at newly replicated origins. Repression is relieved when the region becomes fully methylated. The protein is Negative modulator of initiation of replication of Psychromonas ingrahamii (strain DSM 17664 / CCUG 51855 / 37).